Consider the following 316-residue polypeptide: Metal cation efflux system protein CzcD (316 aa).

Over 1-16 (MGAGHSHDHPGGNERS) the chain is Cytoplasmic. The chain crosses the membrane as a helical span at residues 17–37 (LKIALALTGTFLIAEVVGGVM). The Periplasmic portion of the chain corresponds to 38 to 46 (TKSLALISD). Residues 47-67 (AAHMLTDTVALAIALAAIAIA) form a helical membrane-spanning segment. At 68-81 (KRPADKKRTFGYYR) the chain is on the cytoplasmic side. Residues 82-102 (FEILAAAFNALLLFGVAIYIL) form a helical membrane-spanning segment. Residues 103–114 (YEAYLRLKSPPQ) lie on the Periplasmic side of the membrane. Residues 115-135 (IESTGMFVVAVLGLIINLISM) form a helical membrane-spanning segment. Topologically, residues 136 to 151 (RMLSSGQSSSLNVKGA) are cytoplasmic. 2 consecutive transmembrane segments (helical) span residues 152–172 (YLEV…AIII) and 174–194 (FTGW…WVLP). The Cytoplasmic segment spans residues 195 to 316 (RTWILLKSSL…GSKSLAAGGN (122 aa)).

The protein belongs to the cation diffusion facilitator (CDF) transporter (TC 2.A.4) family. SLC30A subfamily.

It is found in the cell inner membrane. With respect to regulation, efflux is inhibited by FCCP. Its function is as follows. Mediates a low-level metal ion resistance, probably by efflux of cations from the cytoplasm into the periplasm. Also mediates resistance to cobalt, cadmium and zinc via regulation of the Czc system. May repress expression of the Czc system by an export of the inducing cations. Binds and transports zinc. Can also bind cobalt, copper and nickel. The protein is Metal cation efflux system protein CzcD (czcD) of Cupriavidus metallidurans (strain ATCC 43123 / DSM 2839 / NBRC 102507 / CH34) (Ralstonia metallidurans).